The primary structure comprises 306 residues: Mycothiol acetyltransferase (306 aa).

2 consecutive N-acetyltransferase domains span residues 5–157 (EIYE…EPAA) and 159–306 (ITIR…HKKL). Residue E36 participates in 1D-myo-inositol 2-(L-cysteinylamino)-2-deoxy-alpha-D-glucopyranoside binding. 82–84 (MLV) provides a ligand contact to acetyl-CoA. Residues D186, K227, and E238 each coordinate 1D-myo-inositol 2-(L-cysteinylamino)-2-deoxy-alpha-D-glucopyranoside. 242 to 244 (LGV) lines the acetyl-CoA pocket. Y276 serves as a coordination point for 1D-myo-inositol 2-(L-cysteinylamino)-2-deoxy-alpha-D-glucopyranoside. Acetyl-CoA is bound at residue 281–286 (NVRAVR).

Belongs to the acetyltransferase family. MshD subfamily. Monomer.

It catalyses the reaction 1D-myo-inositol 2-(L-cysteinylamino)-2-deoxy-alpha-D-glucopyranoside + acetyl-CoA = mycothiol + CoA + H(+). Catalyzes the transfer of acetyl from acetyl-CoA to desacetylmycothiol (Cys-GlcN-Ins) to form mycothiol. This chain is Mycothiol acetyltransferase, found in Stackebrandtia nassauensis (strain DSM 44728 / CIP 108903 / NRRL B-16338 / NBRC 102104 / LLR-40K-21).